The chain runs to 316 residues: Ribosomal protein L11 methyltransferase (316 aa).

Residues Thr161, Gly182, Asp204, and Asn249 each coordinate S-adenosyl-L-methionine.

It belongs to the methyltransferase superfamily. PrmA family.

It localises to the cytoplasm. It catalyses the reaction L-lysyl-[protein] + 3 S-adenosyl-L-methionine = N(6),N(6),N(6)-trimethyl-L-lysyl-[protein] + 3 S-adenosyl-L-homocysteine + 3 H(+). Methylates ribosomal protein L11. This Ruminiclostridium cellulolyticum (strain ATCC 35319 / DSM 5812 / JCM 6584 / H10) (Clostridium cellulolyticum) protein is Ribosomal protein L11 methyltransferase.